A 194-amino-acid polypeptide reads, in one-letter code: Small ribosomal subunit protein uS7 (194 aa).

The protein belongs to the universal ribosomal protein uS7 family. Part of the 30S ribosomal subunit.

In terms of biological role, one of the primary rRNA binding proteins, it binds directly to 16S rRNA where it nucleates assembly of the head domain of the 30S subunit. Is located at the subunit interface close to the decoding center. The protein is Small ribosomal subunit protein uS7 of Archaeoglobus fulgidus (strain ATCC 49558 / DSM 4304 / JCM 9628 / NBRC 100126 / VC-16).